A 729-amino-acid polypeptide reads, in one-letter code: Fatty acid oxidation complex subunit alpha (729 aa).

The segment at 1 to 189 is enoyl-CoA hydratase/isomerase; the sequence is MLYKGDTLYL…KIGLVDGVVK (189 aa). Substrate is bound at residue Asp-296. The segment at 311 to 729 is 3-hydroxyacyl-CoA dehydrogenase; it reads ETPKQAAVLG…ARPVGDLKTA (419 aa). NAD(+)-binding positions include Met-324, Asp-343, 400–402, Lys-407, and Ser-429; that span reads VVE. The For 3-hydroxyacyl-CoA dehydrogenase activity role is filled by His-450. Asn-453 lines the NAD(+) pocket. Residues Asn-500 and Tyr-660 each contribute to the substrate site. The disordered stretch occupies residues 708–729; it reads RHNEPYYPPVEPARPVGDLKTA.

The protein in the N-terminal section; belongs to the enoyl-CoA hydratase/isomerase family. In the C-terminal section; belongs to the 3-hydroxyacyl-CoA dehydrogenase family. As to quaternary structure, heterotetramer of two alpha chains (FadB) and two beta chains (FadA).

The catalysed reaction is a (3S)-3-hydroxyacyl-CoA + NAD(+) = a 3-oxoacyl-CoA + NADH + H(+). It carries out the reaction a (3S)-3-hydroxyacyl-CoA = a (2E)-enoyl-CoA + H2O. The enzyme catalyses a 4-saturated-(3S)-3-hydroxyacyl-CoA = a (3E)-enoyl-CoA + H2O. It catalyses the reaction (3S)-3-hydroxybutanoyl-CoA = (3R)-3-hydroxybutanoyl-CoA. The catalysed reaction is a (3Z)-enoyl-CoA = a 4-saturated (2E)-enoyl-CoA. It carries out the reaction a (3E)-enoyl-CoA = a 4-saturated (2E)-enoyl-CoA. It functions in the pathway lipid metabolism; fatty acid beta-oxidation. Functionally, involved in the aerobic and anaerobic degradation of long-chain fatty acids via beta-oxidation cycle. Catalyzes the formation of 3-oxoacyl-CoA from enoyl-CoA via L-3-hydroxyacyl-CoA. It can also use D-3-hydroxyacyl-CoA and cis-3-enoyl-CoA as substrate. This chain is Fatty acid oxidation complex subunit alpha, found in Escherichia coli O17:K52:H18 (strain UMN026 / ExPEC).